We begin with the raw amino-acid sequence, 1352 residues long: Astrotactin-2 (1352 aa).

Residues 1–31 (MAAAGARRSPGRGLGLRGRPRLGFHPGPPPP) form a disordered region. The signal sequence occupies residues 1–51 (MAAAGARRSPGRGLGLRGRPRLGFHPGPPPPPPPPLLLLFLLLLPPPPLLA). Residues 52–218 (GATAAAASRE…IVEEQMHILH (167 aa)) are Lumenal-facing. A glycan (N-linked (GlcNAc...) asparagine) is linked at Asn180. A helical membrane pass occupies residues 219 to 239 (ISVMGGLIALLLLLLVFTVAL). Residues 240–447 (YAQRRWQKRR…KGLLKSPVNK (208 aa)) lie on the Cytoplasmic side of the membrane. Disordered regions lie at residues 308–327 (EEEE…DEFG) and 375–421 (TPVE…ADDE). The span at 383 to 392 (QPASRSSTSA) shows a compositional bias: polar residues. A helical transmembrane segment spans residues 448 to 468 (TALTLIAVSSCILAMVCGNQM). The Lumenal portion of the chain corresponds to 469–1352 (SCPLTVKVTL…RNTYGETKGR (884 aa)). EGF-like domains follow at residues 523 to 563 (VRDL…HLCV), 664 to 708 (PVRD…SGCY), and 712 to 764 (KGID…KSCL). 9 disulfides stabilise this stretch: Cys527–Cys539, Cys535–Cys546, Cys548–Cys562, Cys668–Cys681, Cys675–Cys692, Cys694–Cys707, Cys716–Cys728, Cys724–Cys748, and Cys750–Cys763. Asn796 carries N-linked (GlcNAc...) asparagine glycosylation. 3 disulfide bridges follow: Cys838–Cys1000, Cys929–Cys990, and Cys996–Cys1003. Asn1033 is a glycosylation site (N-linked (GlcNAc...) asparagine). 5 disulfides stabilise this stretch: Cys1049–Cys1060, Cys1062–Cys1075, Cys1149–Cys1171, Cys1203–Cys1290, and Cys1311–Cys1334. Residues 1079-1201 (PQPVLRLSPT…SELSTVTLRT (123 aa)) form the Fibronectin type-III domain.

Belongs to the astrotactin family. In terms of assembly, interacts with ASTN1; the interaction is not calcium-dependent. Detected in cerebellum granule neurons; not detected in astroglia (at protein level). Detected primarily in cerebellum, and at lower levels in brain cortex, olfactory bulb, hindbrain and hippocampus dentate gyrus. Between 6 and 10 days after birth, when granule cell migration occurs in the cerebellum, detected in granule cell precursors in the external germinal layer, the molecular layer, the internal granule layer and in Purkinje neurons. Detected in postmitotic neurons in adult cerebellum.

Its subcellular location is the membrane. The protein localises to the perikaryon. It is found in the cytoplasm. The protein resides in the cell cortex. It localises to the early endosome. Its subcellular location is the late endosome. The protein localises to the cytoplasmic vesicle. It is found in the clathrin-coated vesicle. Functionally, mediates recycling of the neuronal cell adhesion molecule ASTN1 to the anterior pole of the cell membrane in migrating neurons. Promotes ASTN1 internalization and intracellular transport of endocytosed ASTN1. Selectively binds inositol-4,5-bisphosphate, inositol-3,4,5-trisphosphate and inositol-1,3,4,5-tetrakisphosphate, suggesting it is recruited to membranes that contain lipids with a phosphoinositide headgroup. The chain is Astrotactin-2 (Astn2) from Mus musculus (Mouse).